The primary structure comprises 311 residues: tRNA-cytidine(32) 2-sulfurtransferase (311 aa).

The PP-loop motif motif lies at 47–52 (SGGKDS). [4Fe-4S] cluster-binding residues include Cys122, Cys125, and Cys213.

The protein belongs to the TtcA family. As to quaternary structure, homodimer. Requires Mg(2+) as cofactor. It depends on [4Fe-4S] cluster as a cofactor.

The protein localises to the cytoplasm. It carries out the reaction cytidine(32) in tRNA + S-sulfanyl-L-cysteinyl-[cysteine desulfurase] + AH2 + ATP = 2-thiocytidine(32) in tRNA + L-cysteinyl-[cysteine desulfurase] + A + AMP + diphosphate + H(+). Its pathway is tRNA modification. In terms of biological role, catalyzes the ATP-dependent 2-thiolation of cytidine in position 32 of tRNA, to form 2-thiocytidine (s(2)C32). The sulfur atoms are provided by the cysteine/cysteine desulfurase (IscS) system. The sequence is that of tRNA-cytidine(32) 2-sulfurtransferase from Escherichia coli O81 (strain ED1a).